The primary structure comprises 818 residues: Probable beta-glucosidase I (818 aa).

A glycan (N-linked (GlcNAc...) asparagine) is linked at N176. The active site involves D204. Positions 374–534 (DGKPGFTFRV…SQEELISNAV (161 aa)) constitute a PA14 domain. N-linked (GlcNAc...) asparagine glycosylation is found at N453 and N472.

Belongs to the glycosyl hydrolase 3 family.

Its subcellular location is the secreted. The enzyme catalyses Hydrolysis of terminal, non-reducing beta-D-glucosyl residues with release of beta-D-glucose.. The protein operates within glycan metabolism; cellulose degradation. Its function is as follows. Beta-glucosidases are one of a number of cellulolytic enzymes involved in the degradation of cellulosic biomass. Catalyzes the last step releasing glucose from the inhibitory cellobiose. The polypeptide is Probable beta-glucosidase I (bglI) (Aspergillus niger (strain ATCC MYA-4892 / CBS 513.88 / FGSC A1513)).